A 363-amino-acid polypeptide reads, in one-letter code: G-protein coupled receptor 78 (363 aa).

The Extracellular portion of the chain corresponds to 1–7; that stretch reads MGPGEAL. Residues 8–28 traverse the membrane as a helical segment; the sequence is LAGLLVMVLAVALLSNALVLL. The Cytoplasmic portion of the chain corresponds to 29–47; sequence CCAYSAELRTRASGVLLVN. Residues 48-68 traverse the membrane as a helical segment; that stretch reads LSLGHLLLAALDMPFTLLGVM. Residues 69 to 80 lie on the Extracellular side of the membrane; sequence RGRTPSAPGACQ. A disulfide bridge connects residues Cys79 and Cys156. Residues 81–101 traverse the membrane as a helical segment; it reads VIGFLDTFLASNAALSVAALS. Residues 102–122 lie on the Cytoplasmic side of the membrane; it reads ADQWLAVGFPLRYAGRLRPRY. Residues 123 to 143 form a helical membrane-spanning segment; that stretch reads AGLLLGCAWGQSLAFSGAALG. At 144-168 the chain is on the extracellular side; it reads CSWLGYSSAFASCSLRLPPEPERPR. Residues 169 to 189 form a helical membrane-spanning segment; it reads FAAFTATLHAVGFVLPLAVLC. At 190 to 242 the chain is on the cytoplasmic side; the sequence is LTSLQVHRVARRHCQRMDTVTMKALALLADLHPSVRQRCLIQQKRRRHRATRK. Residues 243 to 263 form a helical membrane-spanning segment; sequence IGIAIATFLICFAPYVMTRLA. Residues 264-277 are Extracellular-facing; it reads ELVPFVTVNAQWGI. The chain crosses the membrane as a helical span at residues 278–297; sequence LSKCLTYSKAVADPFTYSLL. Over 298 to 363 the chain is Cytoplasmic; that stretch reads RRPFRQVLAG…ENDSCLQQTH (66 aa). The disordered stretch occupies residues 340–363; that stretch reads TPRPASTHNGSVDTENDSCLQQTH. The segment covering 343 to 363 has biased composition (polar residues); the sequence is PASTHNGSVDTENDSCLQQTH.

This sequence belongs to the G-protein coupled receptor 1 family. In terms of tissue distribution, high level of expression in placenta. Expressed throughout the brain at low level. No expression detected in skeletal muscle, lung, heart, liver, pancreas, or kidney.

Its subcellular location is the cell membrane. Orphan receptor. Displays a significant level of constitutive activity. Its effect is mediated by G(s)-alpha protein that stimulate adenylate cyclase, resulting in an elevation of intracellular cAMP. The sequence is that of G-protein coupled receptor 78 (GPR78) from Homo sapiens (Human).